A 94-amino-acid chain; its full sequence is Small ribosomal subunit protein uS19 (94 aa).

This sequence belongs to the universal ribosomal protein uS19 family.

Functionally, protein S19 forms a complex with S13 that binds strongly to the 16S ribosomal RNA. The polypeptide is Small ribosomal subunit protein uS19 (Desulforudis audaxviator (strain MP104C)).